We begin with the raw amino-acid sequence, 430 residues long: Asparagine--tRNA ligase (430 aa).

It belongs to the class-II aminoacyl-tRNA synthetase family. As to quaternary structure, homodimer.

It is found in the cytoplasm. The enzyme catalyses tRNA(Asn) + L-asparagine + ATP = L-asparaginyl-tRNA(Asn) + AMP + diphosphate + H(+). This Bacillus velezensis (strain DSM 23117 / BGSC 10A6 / LMG 26770 / FZB42) (Bacillus amyloliquefaciens subsp. plantarum) protein is Asparagine--tRNA ligase.